An 84-amino-acid polypeptide reads, in one-letter code: ATP synthase subunit c (84 aa).

2 consecutive transmembrane segments (helical) span residues 9–29 and 54–74; these read IIGASILLAFAALGTAIGFAI and IVAGLLDAIAMIAVGISLLFI.

The protein belongs to the ATPase C chain family. As to quaternary structure, F-type ATPases have 2 components, F(1) - the catalytic core - and F(0) - the membrane proton channel. F(1) has five subunits: alpha(3), beta(3), gamma(1), delta(1), epsilon(1). F(0) has three main subunits: a(1), b(2) and c(10-14). The alpha and beta chains form an alternating ring which encloses part of the gamma chain. F(1) is attached to F(0) by a central stalk formed by the gamma and epsilon chains, while a peripheral stalk is formed by the delta and b chains.

It is found in the cell inner membrane. Functionally, f(1)F(0) ATP synthase produces ATP from ADP in the presence of a proton or sodium gradient. F-type ATPases consist of two structural domains, F(1) containing the extramembraneous catalytic core and F(0) containing the membrane proton channel, linked together by a central stalk and a peripheral stalk. During catalysis, ATP synthesis in the catalytic domain of F(1) is coupled via a rotary mechanism of the central stalk subunits to proton translocation. In terms of biological role, key component of the F(0) channel; it plays a direct role in translocation across the membrane. A homomeric c-ring of between 10-14 subunits forms the central stalk rotor element with the F(1) delta and epsilon subunits. The chain is ATP synthase subunit c from Haemophilus influenzae (strain PittEE).